Consider the following 322-residue polypeptide: Methionyl-tRNA formyltransferase (322 aa).

Residue 112–115 (SLLP) participates in (6S)-5,6,7,8-tetrahydrofolate binding.

This sequence belongs to the Fmt family.

It carries out the reaction L-methionyl-tRNA(fMet) + (6R)-10-formyltetrahydrofolate = N-formyl-L-methionyl-tRNA(fMet) + (6S)-5,6,7,8-tetrahydrofolate + H(+). In terms of biological role, attaches a formyl group to the free amino group of methionyl-tRNA(fMet). The formyl group appears to play a dual role in the initiator identity of N-formylmethionyl-tRNA by promoting its recognition by IF2 and preventing the misappropriation of this tRNA by the elongation apparatus. The protein is Methionyl-tRNA formyltransferase of Synechococcus sp. (strain JA-2-3B'a(2-13)) (Cyanobacteria bacterium Yellowstone B-Prime).